Reading from the N-terminus, the 629-residue chain is TRAF3-interacting protein 1 (629 aa).

The interval 130–511 (AGDKLDQKGK…RSLVSEASRK (382 aa)) is disordered. Positions 145–306 (SQDKENREGR…KIKAAEEISK (162 aa)) are enriched in basic and acidic residues. Residues 220–282 (RDREKDKTRE…RREKEKDKER (63 aa)) adopt a coiled-coil conformation. Acidic residues predominate over residues 352-362 (EQDETESEGEA). The span at 394–403 (RPSSARPAAP) shows a compositional bias: low complexity. The span at 471-511 (GDDKHGGLVKKILETKKDYESSPSSKSKEQDRSLVSEASRK) shows a compositional bias: basic and acidic residues. Residues 511–602 (KKERELVARE…QLIKDQQDKI (92 aa)) adopt a coiled-coil conformation.

The protein belongs to the TRAF3IP1 family. As to quaternary structure, component of the IFT complex B, at least composed of ift20, ift22, ift25, ift27, ift46, ift52, traf3ip1/ift54, ift57, ift74, ift80, ift81, and ift88. Interacts with ift88. Interacts with il13ra1. Binds to microtubules, traf3 and disc1. Interacts with map4.

Its subcellular location is the cytoplasm. The protein localises to the cytoskeleton. It localises to the cell projection. The protein resides in the cilium. It is found in the cilium axoneme. Its subcellular location is the cilium basal body. Its function is as follows. Plays an inhibitory role on IL13 signaling by binding to IL13RA1 and recruits TRAF3 and DISC1 to the microtubules. Involved in the regulation of microtubule cytoskeleton organization. Is a negative regulator of microtubule stability, acting through the control of MAP4 levels. Involved in ciliogenesis. In Danio rerio (Zebrafish), this protein is TRAF3-interacting protein 1 (traf3ip1).